Here is a 317-residue protein sequence, read N- to C-terminus: Pectinesterase 31 (317 aa).

2 residues coordinate substrate: threonine 91 and glutamine 121. Residue aspartate 144 is the Proton donor of the active site. Residue aspartate 165 is the Nucleophile of the active site. Substrate-binding residues include arginine 222 and tryptophan 224.

This sequence belongs to the pectinesterase family. Expressed in siliques.

It carries out the reaction [(1-&gt;4)-alpha-D-galacturonosyl methyl ester](n) + n H2O = [(1-&gt;4)-alpha-D-galacturonosyl](n) + n methanol + n H(+). It participates in glycan metabolism; pectin degradation; 2-dehydro-3-deoxy-D-gluconate from pectin: step 1/5. With respect to regulation, does not require salt for activity. Not inhibited by kiwi pectin methylesterase inhibitor (PMEI). Functionally, acts in the modification of cell walls via demethylesterification of cell wall pectin. Acts in a blockwise manner, resulting in a cell wall rigidification. This Arabidopsis thaliana (Mouse-ear cress) protein is Pectinesterase 31 (PME31).